The chain runs to 482 residues: tRNA sulfurtransferase (482 aa).

In terms of domain architecture, THUMP spans 61–165 (LAIRDALTRI…DDRLLLIKGR (105 aa)). ATP is bound by residues 183–184 (LI), lysine 265, glycine 287, and glutamine 296. A disulfide bond links cysteine 344 and cysteine 456. The 79-residue stretch at 404–482 (FGPNDVILDI…GFNNVKVYRP (79 aa)) folds into the Rhodanese domain. Cysteine 456 functions as the Cysteine persulfide intermediate in the catalytic mechanism.

Belongs to the ThiI family.

The protein localises to the cytoplasm. It catalyses the reaction [ThiI sulfur-carrier protein]-S-sulfanyl-L-cysteine + a uridine in tRNA + 2 reduced [2Fe-2S]-[ferredoxin] + ATP + H(+) = [ThiI sulfur-carrier protein]-L-cysteine + a 4-thiouridine in tRNA + 2 oxidized [2Fe-2S]-[ferredoxin] + AMP + diphosphate. The enzyme catalyses [ThiS sulfur-carrier protein]-C-terminal Gly-Gly-AMP + S-sulfanyl-L-cysteinyl-[cysteine desulfurase] + AH2 = [ThiS sulfur-carrier protein]-C-terminal-Gly-aminoethanethioate + L-cysteinyl-[cysteine desulfurase] + A + AMP + 2 H(+). It functions in the pathway cofactor biosynthesis; thiamine diphosphate biosynthesis. Its function is as follows. Catalyzes the ATP-dependent transfer of a sulfur to tRNA to produce 4-thiouridine in position 8 of tRNAs, which functions as a near-UV photosensor. Also catalyzes the transfer of sulfur to the sulfur carrier protein ThiS, forming ThiS-thiocarboxylate. This is a step in the synthesis of thiazole, in the thiamine biosynthesis pathway. The sulfur is donated as persulfide by IscS. In Escherichia coli (strain 55989 / EAEC), this protein is tRNA sulfurtransferase.